The primary structure comprises 264 residues: Thymidylate synthase (264 aa).

Position 21 (arginine 21) interacts with dUMP. Position 51 (histidine 51) interacts with (6R)-5,10-methylene-5,6,7,8-tetrahydrofolate. 126 to 127 is a dUMP binding site; that stretch reads RR. The active-site Nucleophile is cysteine 146. Residues 166 to 169, asparagine 177, and 207 to 209 contribute to the dUMP site; these read RSCD and HLY. Aspartate 169 is a binding site for (6R)-5,10-methylene-5,6,7,8-tetrahydrofolate. Residue alanine 263 coordinates (6R)-5,10-methylene-5,6,7,8-tetrahydrofolate.

It belongs to the thymidylate synthase family. Bacterial-type ThyA subfamily. As to quaternary structure, homodimer.

The protein resides in the cytoplasm. The enzyme catalyses dUMP + (6R)-5,10-methylene-5,6,7,8-tetrahydrofolate = 7,8-dihydrofolate + dTMP. Its pathway is pyrimidine metabolism; dTTP biosynthesis. Its function is as follows. Catalyzes the reductive methylation of 2'-deoxyuridine-5'-monophosphate (dUMP) to 2'-deoxythymidine-5'-monophosphate (dTMP) while utilizing 5,10-methylenetetrahydrofolate (mTHF) as the methyl donor and reductant in the reaction, yielding dihydrofolate (DHF) as a by-product. This enzymatic reaction provides an intracellular de novo source of dTMP, an essential precursor for DNA biosynthesis. In Photorhabdus laumondii subsp. laumondii (strain DSM 15139 / CIP 105565 / TT01) (Photorhabdus luminescens subsp. laumondii), this protein is Thymidylate synthase.